We begin with the raw amino-acid sequence, 146 residues long: Histone H2A.1 (146 aa).

The disordered stretch occupies residues 118 to 146; sequence SPAAAEKEAKSPKKKTSTKSPKKKVAAKE. 2 consecutive short sequence motifs (SPKK motif) follow at residues 128 to 131 and 137 to 140; these read SPKK. Over residues 129–146 the composition is skewed to basic residues; it reads PKKKTSTKSPKKKVAAKE.

It belongs to the histone H2A family. In terms of assembly, the nucleosome is a histone octamer containing two molecules each of H2A, H2B, H3 and H4 assembled in one H3-H4 heterotetramer and two H2A-H2B heterodimers. The octamer wraps approximately 147 bp of DNA. Post-translationally, phosphorylated within its C-terminal part, probably at the SPKK motifs. Expressed preferentially in meristematic tissues of young seedlings, in stigma and ovary but not in pollen.

The protein resides in the nucleus. It localises to the chromosome. Functionally, core component of nucleosome. Nucleosomes wrap and compact DNA into chromatin, limiting DNA accessibility to the cellular machineries which require DNA as a template. Histones thereby play a central role in transcription regulation, DNA repair, DNA replication and chromosomal stability. DNA accessibility is regulated via a complex set of post-translational modifications of histones, also called histone code, and nucleosome remodeling. The protein is Histone H2A.1 (H2A-9) of Triticum aestivum (Wheat).